The chain runs to 418 residues: Sterigmatocystin 8-O-methyltransferase (418 aa).

A propeptide spanning residues 1–41 is cleaved from the precursor; the sequence is MTLPNKAALVGLAHTLSEQVKRYLVTADETKSPEDHKLCIE. Position 170–176 (170–176) interacts with substrate; the sequence is MRSAAYF. The interval 206-225 is substrate binding; that stretch reads LFDYYSTVDEVRGRRFDLGM. Residues 254–255, aspartate 277, 297–298, and arginine 313 contribute to the S-adenosyl-L-methionine site; these read GG and DI. Histidine 317 (proton acceptor) is an active-site residue.

It belongs to the class I-like SAM-binding methyltransferase superfamily. Cation-independent O-methyltransferase family. COMT subfamily.

It catalyses the reaction sterigmatocystin + S-adenosyl-L-methionine = 8-O-methylsterigmatocystin + S-adenosyl-L-homocysteine + H(+). The enzyme catalyses dihydrosterigmatocystin + S-adenosyl-L-methionine = 8-O-methyldihydrosterigmatocystin + S-adenosyl-L-homocysteine + H(+). Its pathway is mycotoxin biosynthesis; aflatoxin biosynthesis. In terms of biological role, involved in the conversion of sterigmatocystin to O-methylsterigmatocystin (OMST) and dihydrosterigmatocystin to dihydro-o-methylsterigmatocystin in the aflatoxin biosynthesis pathway. This Aspergillus flavus (strain ATCC 200026 / FGSC A1120 / IAM 13836 / NRRL 3357 / JCM 12722 / SRRC 167) protein is Sterigmatocystin 8-O-methyltransferase (omtA).